The chain runs to 491 residues: Protein nucleotidyltransferase YdiU (491 aa).

Residues Gly-94, Gly-96, Arg-97, Lys-117, Asp-129, Gly-130, Arg-180, and Arg-187 each coordinate ATP. The active-site Proton acceptor is Asp-256. 2 residues coordinate Mg(2+): Asn-257 and Asp-266. An ATP-binding site is contributed by Asp-266.

Belongs to the SELO family. The cofactor is Mg(2+). Mn(2+) serves as cofactor.

The catalysed reaction is L-seryl-[protein] + ATP = 3-O-(5'-adenylyl)-L-seryl-[protein] + diphosphate. The enzyme catalyses L-threonyl-[protein] + ATP = 3-O-(5'-adenylyl)-L-threonyl-[protein] + diphosphate. It carries out the reaction L-tyrosyl-[protein] + ATP = O-(5'-adenylyl)-L-tyrosyl-[protein] + diphosphate. It catalyses the reaction L-histidyl-[protein] + UTP = N(tele)-(5'-uridylyl)-L-histidyl-[protein] + diphosphate. The catalysed reaction is L-seryl-[protein] + UTP = O-(5'-uridylyl)-L-seryl-[protein] + diphosphate. The enzyme catalyses L-tyrosyl-[protein] + UTP = O-(5'-uridylyl)-L-tyrosyl-[protein] + diphosphate. In terms of biological role, nucleotidyltransferase involved in the post-translational modification of proteins. It can catalyze the addition of adenosine monophosphate (AMP) or uridine monophosphate (UMP) to a protein, resulting in modifications known as AMPylation and UMPylation. This is Protein nucleotidyltransferase YdiU from Alkaliphilus metalliredigens (strain QYMF).